We begin with the raw amino-acid sequence, 362 residues long: Tyrosine recombinase XerH (362 aa).

Residues 43–140 enclose the Core-binding (CB) domain; sequence ECLNELNQAC…ALLGLFSYID (98 aa). The 188-residue stretch at 170–357 folds into the Tyr recombinase domain; sequence KLPTHLNNEE…DKQRLEEAAS (188 aa). Active-site residues include Arg-213, Lys-239, His-309, Arg-312, and His-335. The O-(3'-phospho-DNA)-tyrosine intermediate role is filled by Tyr-344.

Belongs to the 'phage' integrase family. XerH subfamily.

The protein localises to the cytoplasm. With respect to regulation, ftsK is required for recombination. In terms of biological role, site-specific tyrosine recombinase, which acts by catalyzing the cutting and rejoining of the recombining DNA molecules. Involved in chromosome segregation. May contribute to chromosome decatenation. The chain is Tyrosine recombinase XerH from Helicobacter pylori (strain ATCC 700392 / 26695) (Campylobacter pylori).